Consider the following 181-residue polypeptide: Oligoribonuclease (181 aa).

One can recognise an Exonuclease domain in the interval 8 to 171 (LIWIDLEMTG…DDIRESVAEL (164 aa)). Y129 is a catalytic residue.

The protein belongs to the oligoribonuclease family.

Its subcellular location is the cytoplasm. In terms of biological role, 3'-to-5' exoribonuclease specific for small oligoribonucleotides. The protein is Oligoribonuclease of Klebsiella pneumoniae subsp. pneumoniae (strain ATCC 700721 / MGH 78578).